Reading from the N-terminus, the 267-residue chain is Cytochrome b (267 aa).

The next 4 helical transmembrane spans lie at 4-24, 48-69, 84-104, and 149-169; these read FGSL…LLAA, WLIR…YLHI, WNTG…GYVL, and FFTL…IHLT. Heme b contacts are provided by His-54 and His-68. Positions 153 and 167 each coordinate heme b. His-172 lines the a ubiquinone pocket. 2 helical membrane-spanning segments follow: residues 197–217 and 259–267; these read LKDI…ALFA and LGGVLALAA.

The protein belongs to the cytochrome b family. In terms of assembly, the cytochrome bc1 complex contains 11 subunits: 3 respiratory subunits (MT-CYB, CYC1 and UQCRFS1), 2 core proteins (UQCRC1 and UQCRC2) and 6 low-molecular weight proteins (UQCRH/QCR6, UQCRB/QCR7, UQCRQ/QCR8, UQCR10/QCR9, UQCR11/QCR10 and a cleavage product of UQCRFS1). This cytochrome bc1 complex then forms a dimer. The cofactor is heme b.

It localises to the mitochondrion inner membrane. Functionally, component of the ubiquinol-cytochrome c reductase complex (complex III or cytochrome b-c1 complex) that is part of the mitochondrial respiratory chain. The b-c1 complex mediates electron transfer from ubiquinol to cytochrome c. Contributes to the generation of a proton gradient across the mitochondrial membrane that is then used for ATP synthesis. The sequence is that of Cytochrome b (MT-CYB) from Raphus cucullatus (Dodo).